Consider the following 75-residue polypeptide: Small ribosomal subunit protein bS18 (75 aa).

Belongs to the bacterial ribosomal protein bS18 family. As to quaternary structure, part of the 30S ribosomal subunit. Forms a tight heterodimer with protein bS6.

In terms of biological role, binds as a heterodimer with protein bS6 to the central domain of the 16S rRNA, where it helps stabilize the platform of the 30S subunit. This Buchnera aphidicola subsp. Cinara cedri (strain Cc) protein is Small ribosomal subunit protein bS18.